The primary structure comprises 206 residues: Imidazole glycerol phosphate synthase subunit HisH (206 aa).

The Glutamine amidotransferase type-1 domain maps to 1–206 (MIVIIDYGMG…LRILKNFGDM (206 aa)). Cys79 acts as the Nucleophile in catalysis. Residues His188 and Glu190 contribute to the active site.

As to quaternary structure, heterodimer of HisH and HisF.

The protein resides in the cytoplasm. It catalyses the reaction 5-[(5-phospho-1-deoxy-D-ribulos-1-ylimino)methylamino]-1-(5-phospho-beta-D-ribosyl)imidazole-4-carboxamide + L-glutamine = D-erythro-1-(imidazol-4-yl)glycerol 3-phosphate + 5-amino-1-(5-phospho-beta-D-ribosyl)imidazole-4-carboxamide + L-glutamate + H(+). The enzyme catalyses L-glutamine + H2O = L-glutamate + NH4(+). It functions in the pathway amino-acid biosynthesis; L-histidine biosynthesis; L-histidine from 5-phospho-alpha-D-ribose 1-diphosphate: step 5/9. In terms of biological role, IGPS catalyzes the conversion of PRFAR and glutamine to IGP, AICAR and glutamate. The HisH subunit catalyzes the hydrolysis of glutamine to glutamate and ammonia as part of the synthesis of IGP and AICAR. The resulting ammonia molecule is channeled to the active site of HisF. The protein is Imidazole glycerol phosphate synthase subunit HisH of Syntrophotalea carbinolica (strain DSM 2380 / NBRC 103641 / GraBd1) (Pelobacter carbinolicus).